The sequence spans 1152 residues: P3N-PIPO polyprotein (1152 aa).

In terms of domain architecture, Peptidase S30 spans 292-437; the sequence is VMNQQTLTAL…HTLTHRMVQY (146 aa). Residues His345, Asp354, and Ser388 each act as for P1 proteinase activity in the active site. An Involved in interaction with stylet and aphid transmission motif is present at residues 489 to 492; that stretch reads KITC. An Involved in virions binding and aphid transmission motif is present at residues 747–749; it reads PTK. One can recognise a Peptidase C6 domain in the interval 773–895; it reads MFVAKDGYCY…ESEMQHYRVG (123 aa). Residues Cys781 and His854 each act as for helper component proteinase activity in the active site.

This sequence belongs to the potyviridae P3N-PIPO polyprotein family. Interacts (via PIPO domain) with host PCaP1 protein; this interaction may help to anchor the movement complex to the plasma membrane from which the complex could move to the plasmodesmata. In terms of processing, potyviral RNA is expressed as two polyproteins which undergo post-translational proteolytic processing. Genome polyprotein is processed by NIa-pro, P1 and HC-pro proteinases resulting in the production of at least ten individual proteins. P3N-PIPO is cleaved by P1 and HC-pro proteinases resulting in the production of three individual proteins. The P1 proteinase and the HC-pro cleave only their respective C-termini autocatalytically.

The protein resides in the host cell junction. It localises to the host plasmodesma. The catalysed reaction is Hydrolyzes a Gly-|-Gly bond at its own C-terminus, commonly in the sequence -Tyr-Xaa-Val-Gly-|-Gly, in the processing of the potyviral polyprotein.. Required for aphid transmission and also has proteolytic activity. Only cleaves a Gly-Gly dipeptide at its own C-terminus. Interacts with virions and aphid stylets. Acts as a suppressor of RNA-mediated gene silencing, also known as post-transcriptional gene silencing (PTGS), a mechanism of plant viral defense that limits the accumulation of viral RNAs. May have RNA-binding activity. In terms of biological role, allows efficient cell to cell propagation, by bypassing the host cell wall barrier. Transports viral genome to neighboring plant cells directly through plasmosdesmata, without any budding. This Carthamus tinctorius (Safflower) protein is P3N-PIPO polyprotein.